We begin with the raw amino-acid sequence, 600 residues long: Aspartate--tRNA(Asp/Asn) ligase (600 aa).

Residue Glu-175 coordinates L-aspartate. Residues 199-202 (QLFK) form an aspartate region. Arg-221 contacts L-aspartate. Residues 221–223 (RDE) and Gln-230 contribute to the ATP site. His-453 contacts L-aspartate. Glu-487 is an ATP binding site. Residue Arg-494 coordinates L-aspartate. 539-542 (GWDR) lines the ATP pocket. The interval 564–600 (GGVDPLTDAPAPITPLQRKESGIDAKPKAAENKPEEK) is disordered. A compositionally biased stretch (basic and acidic residues) spans 580 to 600 (QRKESGIDAKPKAAENKPEEK).

It belongs to the class-II aminoacyl-tRNA synthetase family. Type 1 subfamily. In terms of assembly, homodimer.

It is found in the cytoplasm. It catalyses the reaction tRNA(Asx) + L-aspartate + ATP = L-aspartyl-tRNA(Asx) + AMP + diphosphate. Aspartyl-tRNA synthetase with relaxed tRNA specificity since it is able to aspartylate not only its cognate tRNA(Asp) but also tRNA(Asn). Reaction proceeds in two steps: L-aspartate is first activated by ATP to form Asp-AMP and then transferred to the acceptor end of tRNA(Asp/Asn). This chain is Aspartate--tRNA(Asp/Asn) ligase, found in Corynebacterium efficiens (strain DSM 44549 / YS-314 / AJ 12310 / JCM 11189 / NBRC 100395).